We begin with the raw amino-acid sequence, 57 residues long: Thiocillin GE37468 (57 aa).

Residues 1–42 (MGNNEEYFIDVNDLSIDVFDVVEQGGAVTALTADHGMPEVGA) constitute a propeptide, removed in mature form. A cross-link (5-methyloxazole-4-carboxylic acid (Ser-Thr)) is located at residues 43-44 (ST). Residues 43 to 52 (STNCFCYICC) constitute a cross-link (pyridine-2,5-dicarboxylic acid (Ser-Cys) (with S-53)). The pyridine-2,5-dicarboxylic acid (Ser-Ser) (with C-52) cross-link spans 43-53 (STNCFCYICCS). Residues 45–46 (NC) constitute a cross-link (thiazole-4-carboxylic acid (Asn-Cys)). The thiazoline-4-carboxylic acid (Phe-Cys) cross-link spans 47 to 48 (FC). A 5-hydroxy-3-methylproline (Ile) modification is found at Ile-50. A cross-link (thiazole-4-carboxylic acid (Ile-Cys)) is located at residues 50–51 (IC). Residues 51 to 52 (CC) constitute a cross-link (thiazole-4-carboxylic acid (Cys-Cys)). Positions 53 to 54 (SC) form a cross-link, thiazole-4-carboxylic acid (Ser-Cys). 2,3-didehydroalanine (Ser) occurs at positions 55 and 56. A propeptide (removed in mature form) is located at residue Asn-57.

Maturation of thiazole and oxazole containing antibiotics involves the enzymatic condensation of a Cys, Ser or Thr with the alpha-carbonyl of the preceding amino acid to form a thioether or ether bond, then dehydration to form a double bond with the alpha-amino nitrogen. Thiazoline or oxazoline ring are dehydrogenated to form thiazole or oxazole rings. In terms of processing, maturation of pyridinyl containing antibiotics involves the cross-linking of a Ser and a Cys-Ser pair usually separated by 7 or 8 residues along the peptide chain. The Ser residues are dehydrated to didehydroalanines, then bonded between their beta carbons. The alpha carbonyl of the Cys condenses with alpha carbon of the first Ser to form a pyridinyl ring. The ring may be multiply dehydrogenated to form a pyridine ring with loss of the amino nitrogen of the first Ser.

It localises to the secreted. Its function is as follows. Has bacteriocidal activity against both aerobic and anaerobic Gram-positive bacteria. Inhibits growth of B.subtilis (MIC=0.047 ug/ml) and methicillin-resistant S.aureus (MRSA) (MIC=0.047 ug/ml). Has poor activity against Gram-negative bacteria, with the exception of B.fragilis. Inhibits bacterial protein biosynthesis by acting on elongation factor Tu (EF-Tu). Full antibiotic activity depends on the presence of the modified residue Ile-50. This chain is Thiocillin GE37468 (getA), found in Streptomyces sp.